A 68-amino-acid chain; its full sequence is Large ribosomal subunit protein bL35 (68 aa).

Composition is skewed to basic residues over residues Met1–Lys11 and Ser19–Ala29. Residues Met1–Met54 are disordered.

Belongs to the bacterial ribosomal protein bL35 family.

The protein is Large ribosomal subunit protein bL35 of Myxococcus xanthus (strain DK1622).